Reading from the N-terminus, the 504-residue chain is Anaerobic nitric oxide reductase transcription regulator NorR (504 aa).

D57 carries the 4-aspartylphosphate modification. A Sigma-54 factor interaction domain is found at 187–416; that stretch reads MIGLSPGMTQ…LEHAIHRAVV (230 aa). ATP contacts are provided by residues 215-222 and 278-287; these read GETGTGKE and ADNGTLFLDE. The H-T-H motif DNA-binding region spans 479 to 498; it reads WAACARMLETDVANLHRLAK.

The protein operates within nitrogen metabolism; nitric oxide reduction. Functionally, required for the expression of anaerobic nitric oxide (NO) reductase, acts as a transcriptional activator for at least the norVW operon. Activation also requires sigma-54. The chain is Anaerobic nitric oxide reductase transcription regulator NorR from Escherichia coli (strain 55989 / EAEC).